The sequence spans 200 residues: Holliday junction branch migration complex subunit RuvA (200 aa).

The segment at 1 to 64 is domain I; it reads MFAYFRGKLT…EDLLQLYGFS (64 aa). The interval 65 to 143 is domain II; it reads GEEERQLFRL…KLSPVSALAS (79 aa). Residues 144-154 are flexible linker; sequence PARLSSTLLRD. The interval 154-200 is domain III; the sequence is DDAVNALVTLGFSRIIVQKAVVAILEQNPGLTVEEVIKAALVSIHNS.

This sequence belongs to the RuvA family. In terms of assembly, homotetramer. Forms an RuvA(8)-RuvB(12)-Holliday junction (HJ) complex. HJ DNA is sandwiched between 2 RuvA tetramers; dsDNA enters through RuvA and exits via RuvB. An RuvB hexamer assembles on each DNA strand where it exits the tetramer. Each RuvB hexamer is contacted by two RuvA subunits (via domain III) on 2 adjacent RuvB subunits; this complex drives branch migration. In the full resolvosome a probable DNA-RuvA(4)-RuvB(12)-RuvC(2) complex forms which resolves the HJ.

The protein localises to the cytoplasm. The RuvA-RuvB-RuvC complex processes Holliday junction (HJ) DNA during genetic recombination and DNA repair, while the RuvA-RuvB complex plays an important role in the rescue of blocked DNA replication forks via replication fork reversal (RFR). RuvA specifically binds to HJ cruciform DNA, conferring on it an open structure. The RuvB hexamer acts as an ATP-dependent pump, pulling dsDNA into and through the RuvAB complex. HJ branch migration allows RuvC to scan DNA until it finds its consensus sequence, where it cleaves and resolves the cruciform DNA. The protein is Holliday junction branch migration complex subunit RuvA of Pelodictyon phaeoclathratiforme (strain DSM 5477 / BU-1).